Here is a 648-residue protein sequence, read N- to C-terminus: Threonine--tRNA ligase (648 aa).

The TGS domain occupies 1–61 (MIKITLPDGS…TTDGNLILYT (61 aa)). Positions 240 to 539 (DHRKLGKELE…LLEHTAGNFP (300 aa)) are catalytic. Residues Cys-335, His-386, and His-516 each contribute to the Zn(2+) site.

It belongs to the class-II aminoacyl-tRNA synthetase family. In terms of assembly, homodimer. Zn(2+) serves as cofactor.

It is found in the cytoplasm. It catalyses the reaction tRNA(Thr) + L-threonine + ATP = L-threonyl-tRNA(Thr) + AMP + diphosphate + H(+). Catalyzes the attachment of threonine to tRNA(Thr) in a two-step reaction: L-threonine is first activated by ATP to form Thr-AMP and then transferred to the acceptor end of tRNA(Thr). Also edits incorrectly charged L-seryl-tRNA(Thr). This chain is Threonine--tRNA ligase, found in Flavobacterium johnsoniae (strain ATCC 17061 / DSM 2064 / JCM 8514 / BCRC 14874 / CCUG 350202 / NBRC 14942 / NCIMB 11054 / UW101) (Cytophaga johnsonae).